The primary structure comprises 158 residues: MALFHNPEERPYKLPDLCRTLDTTLHDVTIDCVYCRRQLQRTEVYEFAFGDLNVVYRDGVPLAACQSCIKFYAKIRELRYYSESVYATTLETITNTKLYDLSIRCMCCLKPLSPAEKLRHLNSKRRFHKIAGNFTGQCRHCWTSKREDRRRTRQETQV.

Zinc fingers lie at residues 32–68 (CVYCRRQLQRTEVYEFAFGDLNVVYRDGVPLAACQSC) and 105–141 (CMCCLKPLSPAEKLRHLNSKRRFHKIAGNFTGQCRHC). A PDZ-binding domain motif is present at residues 156-158 (TQV).

This sequence belongs to the papillomaviridae E6 protein family. As to quaternary structure, forms homodimers. Interacts with ubiquitin-protein ligase UBE3A/E6-AP; this interaction stimulates UBE3A ubiquitin activity. Interacts with host BAK1.

Its subcellular location is the host cytoplasm. It is found in the host nucleus. Functionally, plays a major role in the induction and maintenance of cellular transformation. E6 associates with host UBE3A/E6-AP ubiquitin-protein ligase and modulates its activity. Protects host keratinocytes from apoptosis by mediating the degradation of host BAK1. May also inhibit host immune response. The chain is Protein E6 from Homo sapiens (Human).